The primary structure comprises 342 residues: Arginase 1, mitochondrial (342 aa).

Residues 1 to 22 (MSRIIGRKGINYIHRLNSASFT) constitute a mitochondrion transit peptide. L-ornithine contacts are provided by residues Ser-77 and 96–99 (GSTN). Mn(2+) is bound by residues His-161, Asp-185, His-187, and Asp-189. Residue 189–191 (DIY) coordinates L-ornithine. 195–197 (EGN) is a substrate binding site. Ser-224 lines the L-ornithine pocket. The Mn(2+) site is built by Asp-270 and Asp-272. Glu-313 is a binding site for substrate.

It belongs to the arginase family. In terms of assembly, forms homohexamers. It depends on Mn(2+) as a cofactor. Expressed in vasculature of roots, root tips, cotyledons, leaves, cauline leaves, stems, sepals and pollen.

The protein resides in the mitochondrion. It catalyses the reaction L-arginine + H2O = urea + L-ornithine. It carries out the reaction agmatine + H2O = urea + putrescine. It participates in nitrogen metabolism; urea cycle; L-ornithine and urea from L-arginine: step 1/1. The protein operates within amine and polyamine biosynthesis; putrescine biosynthesis via agmatine pathway; putrescine from agmatine: step 1/1. Its function is as follows. Catalyzes the hydrolysis of L-arginine to urea and L-ornithine. The latter can be utilized in the urea cycle or as a precursor for the synthesis of both polyamines and proline. Possesses agmatinase activity. Catalyzes the formation of putrescine from agmatine. The chain is Arginase 1, mitochondrial from Arabidopsis thaliana (Mouse-ear cress).